A 622-amino-acid chain; its full sequence is Transcription factor SKN7 (622 aa).

Over residues 1–12 (MSFSTINSNVNK) the composition is skewed to polar residues. The tract at residues 1 to 29 (MSFSTINSNVNKTTGDSNNNTTENSSTAD) is disordered. Residues 13–27 (TTGDSNNNTTENSST) show a composition bias toward low complexity. Positions 84-190 (ANEFVRKLFR…GLDNIKRKIP (107 aa)) are DNA-binding domain. Positions 212-303 (TNPNNPSGSL…NNFNTLCSTL (92 aa)) are hydrophobic repeat HR-A/B. The stretch at 240-260 (FGNLRRRVDKLQKELDMSKME) forms a coiled coil. A Response regulatory domain is found at 378-492 (HVLLVEDDAV…DLHSILIRYL (115 aa)). Position 427 is a 4-aspartylphosphate (D427). Disordered stretches follow at residues 501 to 579 (QQLP…QHHN) and 599 to 622 (TVPH…NQLS). Low complexity predominate over residues 512-527 (THSNTNTANSNPNTIN). A compositionally biased stretch (polar residues) spans 537–554 (DNPSTTTPVTPGASISSA). The segment covering 555-578 (QHVQQGQQEQQHQIFHAQQQQQHH) has biased composition (low complexity). The span at 600–622 (VPHSSMGSTPQLPQSTLQENQLS) shows a compositional bias: polar residues.

This sequence belongs to the SKN7 family. As to quaternary structure, homotrimer. The phosphorelay mechanism involves the sequential transfer of a phosphate group from 'His-576' (H1) to 'Asp-1144' (D1) of SLN1, then to 'His-64' (H2) of YPD1 and finally to Asp-427 (D2) of SKN7.

The protein resides in the nucleus. Functionally, transcription factor that is part of a SLN1-YPD1-SKN7 two-component regulatory system, which controls gene expression in response to changes in the osmolarity of the extracellular environment. Under low osmotic conditions, phosphorylated and activated by the phosphorelay intermediate protein YPD1. Also activated in response to oxidative stress, independent on the two-component regulatory system. Regulates heat shock genes in response to oxidative stress and genes involved in cell wall integrity in response to osmotic changes. The polypeptide is Transcription factor SKN7 (SKN7) (Saccharomyces cerevisiae (strain ATCC 204508 / S288c) (Baker's yeast)).